We begin with the raw amino-acid sequence, 358 residues long: RNA demethylase ALKBH5 (358 aa).

Residues Met1–Lys50 are disordered. A compositionally biased stretch (basic and acidic residues) spans Asp7–Glu22. The segment covering Asp32–Glu46 has biased composition (acidic residues). The active site involves Tyr105. 2-oxoglutarate contacts are provided by Asn159, Tyr161, His170, His232, and Arg243. Cysteines 196 and 233 form a disulfide. Disordered stretches follow at residues Glu259–Val312 and Asp334–His358. The segment covering Ser262–Gln278 has biased composition (polar residues). Basic residues predominate over residues His279–Arg288. Residues Lys289–Arg310 show a composition bias toward basic and acidic residues.

It belongs to the alkB family. As to quaternary structure, monomer. The cofactor is Fe(2+).

It localises to the nucleus speckle. The enzyme catalyses an N(6)-methyladenosine in mRNA + 2-oxoglutarate + O2 = an adenosine in mRNA + formaldehyde + succinate + CO2. Dioxygenase that specifically demethylates N(6)-methyladenosine (m6A) RNA, the most prevalent internal modification of messenger RNA (mRNA) in higher eukaryotes. Demethylates RNA by oxidative demethylation, which requires molecular oxygen, alpha-ketoglutarate and iron. Demethylation of m6A mRNA affects mRNA processing, translation and export. The protein is RNA demethylase ALKBH5 (alkbh5) of Xenopus tropicalis (Western clawed frog).